We begin with the raw amino-acid sequence, 504 residues long: Maturase K (504 aa).

This sequence belongs to the intron maturase 2 family. MatK subfamily.

The protein resides in the plastid. The protein localises to the chloroplast. Functionally, usually encoded in the trnK tRNA gene intron. Probably assists in splicing its own and other chloroplast group II introns. The chain is Maturase K from Arabidopsis lyrata (Lyre-leaved rock-cress).